A 616-amino-acid polypeptide reads, in one-letter code: MKKGFIQNVHLAPATSLFVPQYKNDFFHLKTKAFLVHKLSESTNAAFTNLLHTLTLKLGFASDTFTVNHLVISYVKLKEINTARKLFDEMCEPNVVSWTSVISGYNDMGKPQNALSMFQKMHEDRPVPPNEYTFASVFKACSALAESRIGKNIHARLEISGLRRNIVVSSSLVDMYGKCNDVETARRVFDSMIGYGRNVVSWTSMITAYAQNARGHEAIELFRSFNAALTSDRANQFMLASVISACSSLGRLQWGKVAHGLVTRGGYESNTVVATSLLDMYAKCGSLSCAEKIFLRIRCHSVISYTSMIMAKAKHGLGEAAVKLFDEMVAGRINPNYVTLLGVLHACSHSGLVNEGLEYLSLMAEKYGVVPDSRHYTCVVDMLGRFGRVDEAYELAKTIEVGAEQGALLWGALLSAGRLHGRVEIVSEASKRLIQSNQQVTSAYIALSNAYAVSGGWEDSESLRLEMKRSGNVKERACSWIENKDSVYVFHAGDLSCDESGEIERFLKDLEKRMKERGHRGSSSMITTSSSVFVDVDEEAKDEMVSLHCERLALAYGLLHLPAGSTIRIMNNLRMCRDCHEAFKLISEIVEREIVVRDVNRFHCFKNGSCTCRDYW.

PPR repeat units follow at residues 63–93, 94–128, 130–164, 165–199, 200–228, 235–269, 270–300, 301–335, 336–371, and 372–402; these read DTFT…MCEP, NVVS…RPVP, NEYT…GLRR, NIVV…GRNV, VSWT…FNAA, NQFM…GYES, NTVV…IRCH, SVIS…RINP, NYVT…GVVP, and DSRH…IEVG. Residues 409-484 are type E motif; sequence LWGALLSAGR…ERACSWIENK (76 aa). Positions 485 to 515 are type E(+) motif; it reads DSVYVFHAGDLSCDESGEIERFLKDLEKRMK. Residues 522 to 616 are type DYW motif; it reads SSSMITTSSS…NGSCTCRDYW (95 aa).

The protein belongs to the PPR family. PCMP-H subfamily.

The protein is Pentatricopeptide repeat-containing protein At4g15720 (PCMP-H1) of Arabidopsis thaliana (Mouse-ear cress).